The following is a 671-amino-acid chain: Replication protein A 70 kDa DNA-binding subunit (671 aa).

Disordered stretches follow at residues 143-166 and 190-219; these read QVSQ…PAVN and MNKT…LQIS. Low complexity predominate over residues 199 to 213; sequence NNNNNNNNNGNNKNN. The segment at residues 240-322 is a DNA-binding region (OB); that stretch reads QTIKVRITKK…NKGDHTVTVN (83 aa). The C4-type zinc finger occupies 530–549; it reads CFSCKKKIARNNEVWTCINC.

The protein belongs to the replication factor A protein 1 family. In terms of assembly, component of the replication protein A complex (RPA), a heterotrimeric complex composed of RPA1, RPA2/TEB2 and RPA3/TEB3.

Its function is as follows. As part of the heterotrimeric replication protein A (RPA) complex, binds and stabilizes single-stranded DNA intermediates, that form during DNA replication or upon DNA stress. It prevents their reannealing and in parallel, recruits and activates different proteins and complexes involved in DNA metabolism. Thereby, it plays an essential role both in DNA replication and the cellular response to DNA damage. In the cellular response to DNA damage, the RPA complex controls DNA repair and DNA damage checkpoint activation. In Tetrahymena thermophila (strain SB210), this protein is Replication protein A 70 kDa DNA-binding subunit.